The sequence spans 76 residues: MSENKASDFVVIKAIDNGVNVIGLTRGSDTRFHHSEKLDKGEVIIAQFTEHTSAIKVRGDAVIQTSFGEIQSEAKK.

The protein belongs to the MtrB family. As to quaternary structure, oligomer of 11 identical subunits arranged in doughnut-like structure.

Functionally, required for transcription attenuation control in the Trp operon. This trans-acting factor seems to recognize a 10 bases nucleotide sequence in the Trp leader transcript causing transcription termination. Binds the leader RNA only in presence of L-tryptophan. This Bacillus pumilus (Bacillus mesentericus) protein is Transcription attenuation protein MtrB (mtrB).